The chain runs to 339 residues: DNA-directed RNA polymerase subunit alpha (339 aa).

Positions Met-1–Glu-235 are alpha N-terminal domain (alpha-NTD). The segment at Phe-251–Tyr-339 is alpha C-terminal domain (alpha-CTD).

This sequence belongs to the RNA polymerase alpha chain family. As to quaternary structure, homodimer. The RNAP catalytic core consists of 2 alpha, 1 beta, 1 beta' and 1 omega subunit. When a sigma factor is associated with the core the holoenzyme is formed, which can initiate transcription.

It carries out the reaction RNA(n) + a ribonucleoside 5'-triphosphate = RNA(n+1) + diphosphate. In terms of biological role, DNA-dependent RNA polymerase catalyzes the transcription of DNA into RNA using the four ribonucleoside triphosphates as substrates. This Methylobacterium sp. (strain 4-46) protein is DNA-directed RNA polymerase subunit alpha.